Reading from the N-terminus, the 868-residue chain is Leucine--tRNA ligase (868 aa).

Positions 42–52 match the 'HIGH' region motif; it reads PYPSGKLHMGH. A 'KMSKS' region motif is present at residues 627–631; it reads KMSKS. Lysine 630 is an ATP binding site.

This sequence belongs to the class-I aminoacyl-tRNA synthetase family.

Its subcellular location is the cytoplasm. The catalysed reaction is tRNA(Leu) + L-leucine + ATP = L-leucyl-tRNA(Leu) + AMP + diphosphate. This chain is Leucine--tRNA ligase, found in Pseudomonas putida (strain GB-1).